Consider the following 207-residue polypeptide: Cilia- and flagella-associated protein 418 (207 aa).

Positions 1–75 are required for interaction with FAM161A; it reads MAEDLDELLD…LINEILEEPN (75 aa). The segment at 26–52 is disordered; it reads MVEQPKGCGGGTHSSDRNQAKAKETLR. Residues 39-52 show a composition bias toward basic and acidic residues; it reads SSDRNQAKAKETLR.

As to quaternary structure, interacts (via N-terminus) with FAM161A (via central region); the interaction is direct. In terms of tissue distribution, widely expressed, with highest levels in heart and brain. Also expressed in the retina (at protein level).

The protein resides in the cytoplasm. It is found in the photoreceptor inner segment. In terms of biological role, may be involved in photoreceptor outer segment disk morphogenesis. The chain is Cilia- and flagella-associated protein 418 from Homo sapiens (Human).